Consider the following 324-residue polypeptide: Annexin A10 (324 aa).

4 Annexin repeats span residues 17 to 88, 89 to 160, 171 to 243, and 247 to 318; these read FNPM…GLMY, PPPS…NLVQ, AMAA…AIVR, and DKPS…AICA.

It belongs to the annexin family.

The sequence is that of Annexin A10 (Anxa10) from Mus musculus (Mouse).